The following is a 209-amino-acid chain: Probable nicotinate-nucleotide adenylyltransferase (209 aa).

Belongs to the NadD family.

The catalysed reaction is nicotinate beta-D-ribonucleotide + ATP + H(+) = deamido-NAD(+) + diphosphate. Its pathway is cofactor biosynthesis; NAD(+) biosynthesis; deamido-NAD(+) from nicotinate D-ribonucleotide: step 1/1. In terms of biological role, catalyzes the reversible adenylation of nicotinate mononucleotide (NaMN) to nicotinic acid adenine dinucleotide (NaAD). This chain is Probable nicotinate-nucleotide adenylyltransferase, found in Streptococcus pneumoniae serotype 4 (strain ATCC BAA-334 / TIGR4).